The sequence spans 89 residues: MSITAERKTALIKEYAKGNKDTGSPEVQIAILTERITNLTAHFKTHGKDNHSRRGLLKLVSQRRSLLDYLKRKEEARYRTLIERLGIRR.

Belongs to the universal ribosomal protein uS15 family. In terms of assembly, part of the 30S ribosomal subunit. Forms a bridge to the 50S subunit in the 70S ribosome, contacting the 23S rRNA.

Its function is as follows. One of the primary rRNA binding proteins, it binds directly to 16S rRNA where it helps nucleate assembly of the platform of the 30S subunit by binding and bridging several RNA helices of the 16S rRNA. In terms of biological role, forms an intersubunit bridge (bridge B4) with the 23S rRNA of the 50S subunit in the ribosome. This chain is Small ribosomal subunit protein uS15, found in Methylorubrum populi (strain ATCC BAA-705 / NCIMB 13946 / BJ001) (Methylobacterium populi).